The chain runs to 323 residues: Delta-aminolevulinic acid dehydratase (323 aa).

The Zn(2+) site is built by cysteine 118, cysteine 120, and cysteine 128. Catalysis depends on lysine 193, which acts as the Schiff-base intermediate with substrate. 5-aminolevulinate-binding residues include arginine 203 and arginine 215. Glutamate 231 contributes to the Mg(2+) binding site. The active-site Schiff-base intermediate with substrate is the lysine 246. The 5-aminolevulinate site is built by serine 272 and tyrosine 311.

It belongs to the ALAD family. In terms of assembly, homooctamer. Requires Zn(2+) as cofactor.

It carries out the reaction 2 5-aminolevulinate = porphobilinogen + 2 H2O + H(+). It participates in porphyrin-containing compound metabolism; protoporphyrin-IX biosynthesis; coproporphyrinogen-III from 5-aminolevulinate: step 1/4. In terms of biological role, catalyzes an early step in the biosynthesis of tetrapyrroles. Binds two molecules of 5-aminolevulinate per subunit, each at a distinct site, and catalyzes their condensation to form porphobilinogen. This chain is Delta-aminolevulinic acid dehydratase (hemB), found in Helicobacter pylori (strain J99 / ATCC 700824) (Campylobacter pylori J99).